Reading from the N-terminus, the 1377-residue chain is MLNSQSGNRLRIDFSNVPQQIDIPNLLQLQKKSFDYFLNIDAKNSESGIEKVFKSIFPIHDPQNRLSLEYVSSEVGKPKYTIRECMERGLTYSVNLKMKIRLTLHEKDEKTGEKIGIKDIKEQEIYIREIPLMTDRISFIINGVERVVVNQLHRSPGVIFKEEESSTVANKLVYTAQIIPDRGSWLYFEYDAKDVLYVRINKRRKVPITILFRALGYKKQDIIKLFYPIQTIHVKKDKFLTEFNPNDFLDRVEYDLKDEKGNIIHQAGKRMTKKKAEQLVKDGIKWVEYPVEILTNRYLANPIINKETGEVLFDSLTLLDESKLAKIKEQKTFDIANDLANGVDAAIINSFIQDNETLKLLKQTENIDDENDLAAIRIYKVMRPGEPVVKDAAKAFVNDLFFNPERYDLTKVGRMKMNHKLGLDTPEYVTVLTNEDIVKTAKYLIKVKNGRGHIDDRDHLGNRRIRSIGELLANELHVGLAKMQKAIRDKFTALNTDIDKVMPYDLINPKTITVTIMEFFTGGQLSQFMDQTNPLSEVTHKRRLSALGEGGLVKERAGFEVRDVHATHYGRICPVETPEGQNIGLINTLSTYAKVNDLGFVEAPYKKVENGKVSNEIVYLTATQEEGLVIAAASTKIDEKGSIVEEFVEARQDGETILARREEVHLIDLCSGMIVGVAASLIPFLEHDDANRALMGSNMQRQAVPLLTAQAPIVGTGMEKIIARDAWEAIKAKRAGIVEKVDNKNIFILGEDENGPFIDHYKMEKNLRTNQNTTFTQHPIVKKGEFVQVGQIIADGPSMDQGELAIGKNALIAFMPWHGYNYEDAIVISEKILREDTFTSVHIYEKEVEARELKDGVEEITKDIPNVKEDDLAHLDESGIAKIGTHIKPGMILVGKVSPKGEVKPTPEERLLRAIFGEKAGHVVNKSLYATASMEGVVVDVKIFTKKGYEKDARAIKAYDEEKLNLEKEHHDRLLMMDREETLRVCSLLSKSALNSDEEINGQKYKKGAKVDIKELEKINRFALNSLVKAYSKDVQKEYEDLKNHFQNEKKKLKSEHDEKLEILEKDDILPSGVVKLVKVYIATKRKLKVGDKMAGRHGNKGIVSNIVPEVDMPYLPDGRPIDIALNPLGVPSRMNIGQILESHLGIVGMRLGDQIQEIFDKKQKDFIKQLRTKILEICSVSRLTLEKKFVESLNDEQLISYARDWARGVKFATPVFEGVTVEEFSKLFEMAKIAMDGKSELYDGRTGEKMAERVHVGCMYMLKLHHLVDEKVHARSTGPYSLVTQQPVGGKALFGGQRFGEMEVWALEAYGAAHTLREMLTIKSDDVEGRFSAYKALTKGENVPATGIPETFFVLTNELKSLALDVEIFDKDENNE.

Belongs to the RNA polymerase beta chain family. In terms of assembly, the RNAP catalytic core consists of 2 alpha, 1 beta, 1 beta' and 1 omega subunit. When a sigma factor is associated with the core the holoenzyme is formed, which can initiate transcription.

The catalysed reaction is RNA(n) + a ribonucleoside 5'-triphosphate = RNA(n+1) + diphosphate. Functionally, DNA-dependent RNA polymerase catalyzes the transcription of DNA into RNA using the four ribonucleoside triphosphates as substrates. The protein is DNA-directed RNA polymerase subunit beta of Campylobacter lari (strain RM2100 / D67 / ATCC BAA-1060).